We begin with the raw amino-acid sequence, 350 residues long: tRNA pseudouridine synthase D (350 aa).

Residue aspartate 85 is the Nucleophile of the active site. Positions 160–310 constitute a TRUD domain; that stretch reads GVINYFGEQR…EAARRTILLR (151 aa).

The protein belongs to the pseudouridine synthase TruD family.

It catalyses the reaction uridine(13) in tRNA = pseudouridine(13) in tRNA. Its function is as follows. Responsible for synthesis of pseudouridine from uracil-13 in transfer RNAs. The protein is tRNA pseudouridine synthase D of Idiomarina loihiensis (strain ATCC BAA-735 / DSM 15497 / L2-TR).